We begin with the raw amino-acid sequence, 294 residues long: Nucleotide-binding protein LVIS_0651 (294 aa).

12–19 (GMSGAGKT) contributes to the ATP binding site. 62–65 (DLRS) contacts GTP.

This sequence belongs to the RapZ-like family.

In terms of biological role, displays ATPase and GTPase activities. The sequence is that of Nucleotide-binding protein LVIS_0651 from Levilactobacillus brevis (strain ATCC 367 / BCRC 12310 / CIP 105137 / JCM 1170 / LMG 11437 / NCIMB 947 / NCTC 947) (Lactobacillus brevis).